We begin with the raw amino-acid sequence, 396 residues long: Elongation factor Tu (396 aa).

The tr-type G domain maps to 10 to 205 (KPHVNVGTIG…AVDEYIPTPE (196 aa)). Positions 19–26 (GHVDHGKT) are G1. 19-26 (GHVDHGKT) contacts GTP. Thr26 is a Mg(2+) binding site. The tract at residues 61–65 (GITIA) is G2. Residues 82–85 (DCPG) form a G3 region. GTP is bound by residues 82–86 (DCPGH) and 137–140 (NKTD). The segment at 137–140 (NKTD) is G4. Residues 175-177 (SAL) form a G5 region.

The protein belongs to the TRAFAC class translation factor GTPase superfamily. Classic translation factor GTPase family. EF-Tu/EF-1A subfamily. As to quaternary structure, monomer.

The protein resides in the cytoplasm. It carries out the reaction GTP + H2O = GDP + phosphate + H(+). Functionally, GTP hydrolase that promotes the GTP-dependent binding of aminoacyl-tRNA to the A-site of ribosomes during protein biosynthesis. In Salinibacter ruber (strain DSM 13855 / M31), this protein is Elongation factor Tu.